Reading from the N-terminus, the 152-residue chain is Snaclec coagulation factor IX/factor X-binding protein subunit A (152 aa).

A signal peptide spans 1–23 (MGRFIFLSFGLLVVFLSLSGTGA). 3 cysteine pairs are disulfide-bonded: cysteine 25-cysteine 36, cysteine 53-cysteine 150, and cysteine 125-cysteine 142. Residues 32 to 151 (YEGHCYNIFH…CGERNPFVCE (120 aa)) enclose the C-type lectin domain. Ca(2+)-binding residues include serine 64, glutamate 66, and glutamate 70. Glutamate 151 serves as a coordination point for Ca(2+).

The protein belongs to the snaclec family. In terms of assembly, heterodimer of subunits A and B; disulfide-linked. As to expression, expressed by the venom gland.

The protein resides in the secreted. Functionally, anticoagulant protein which binds to the gamma-carboxyglutamic acid-domain regions of factors IX (F9) and factor X (F10) in the presence of calcium with a 1 to 1 stoichiometry. This Gloydius halys (Chinese water mocassin) protein is Snaclec coagulation factor IX/factor X-binding protein subunit A.